The following is a 121-amino-acid chain: Trypsin/alpha-amylase inhibitor CMX1/CMX3 (121 aa).

The first 24 residues, 1 to 24 (MAFKHQLILSTAILLAVLAAASAS), serve as a signal peptide directing secretion.

Belongs to the protease inhibitor I6 (cereal trypsin/alpha-amylase inhibitor) family.

The protein localises to the secreted. This is Trypsin/alpha-amylase inhibitor CMX1/CMX3 from Triticum aestivum (Wheat).